Here is a 936-residue protein sequence, read N- to C-terminus: Protein translocase subunit SecA (936 aa).

ATP is bound by residues Gln87, 105–109, and Asp515; that span reads GEGKT. Zn(2+)-binding residues include Cys920, Cys922, Cys931, and His932.

It belongs to the SecA family. As to quaternary structure, monomer and homodimer. Part of the essential Sec protein translocation apparatus which comprises SecA, SecYEG and auxiliary proteins SecDF-YajC and YidC. The cofactor is Zn(2+).

The protein resides in the cell inner membrane. It localises to the cytoplasm. It catalyses the reaction ATP + H2O + cellular proteinSide 1 = ADP + phosphate + cellular proteinSide 2.. Part of the Sec protein translocase complex. Interacts with the SecYEG preprotein conducting channel. Has a central role in coupling the hydrolysis of ATP to the transfer of proteins into and across the cell membrane, serving both as a receptor for the preprotein-SecB complex and as an ATP-driven molecular motor driving the stepwise translocation of polypeptide chains across the membrane. The protein is Protein translocase subunit SecA of Paraburkholderia phymatum (strain DSM 17167 / CIP 108236 / LMG 21445 / STM815) (Burkholderia phymatum).